Reading from the N-terminus, the 390-residue chain is tRNA-specific 2-thiouridylase MnmA (390 aa).

ATP is bound by residues 33 to 40 (AMSGGVDS) and M59. C131 functions as the Nucleophile in the catalytic mechanism. C131 and C230 are disulfide-bonded. G155 serves as a coordination point for ATP. The segment at 180-182 (KDQ) is interaction with tRNA. C230 serves as the catalytic Cysteine persulfide intermediate.

The protein belongs to the MnmA/TRMU family.

It localises to the cytoplasm. The enzyme catalyses S-sulfanyl-L-cysteinyl-[protein] + uridine(34) in tRNA + AH2 + ATP = 2-thiouridine(34) in tRNA + L-cysteinyl-[protein] + A + AMP + diphosphate + H(+). Its function is as follows. Catalyzes the 2-thiolation of uridine at the wobble position (U34) of tRNA, leading to the formation of s(2)U34. The chain is tRNA-specific 2-thiouridylase MnmA from Symbiobacterium thermophilum (strain DSM 24528 / JCM 14929 / IAM 14863 / T).